The following is a 449-amino-acid chain: Tubulin alpha chain (449 aa).

Gln-11, Glu-71, Ser-140, Gly-144, Thr-145, Thr-179, Asn-206, and Asn-228 together coordinate GTP. Glu-71 contributes to the Mg(2+) binding site. Glu-254 is a catalytic residue.

It belongs to the tubulin family. In terms of assembly, dimer of alpha and beta chains. A typical microtubule is a hollow water-filled tube with an outer diameter of 25 nm and an inner diameter of 15 nM. Alpha-beta heterodimers associate head-to-tail to form protofilaments running lengthwise along the microtubule wall with the beta-tubulin subunit facing the microtubule plus end conferring a structural polarity. Microtubules usually have 13 protofilaments but different protofilament numbers can be found in some organisms and specialized cells. Mg(2+) is required as a cofactor.

It is found in the cytoplasm. Its subcellular location is the cytoskeleton. It catalyses the reaction GTP + H2O = GDP + phosphate + H(+). Functionally, tubulin is the major constituent of microtubules, a cylinder consisting of laterally associated linear protofilaments composed of alpha- and beta-tubulin heterodimers. Microtubules grow by the addition of GTP-tubulin dimers to the microtubule end, where a stabilizing cap forms. Below the cap, tubulin dimers are in GDP-bound state, owing to GTPase activity of alpha-tubulin. The polypeptide is Tubulin alpha chain (TUBA) (Sordaria macrospora (strain ATCC MYA-333 / DSM 997 / K(L3346) / K-hell)).